We begin with the raw amino-acid sequence, 460 residues long: Chromosomal replication initiator protein DnaA (460 aa).

Positions 1-91 (MSLINPKVSA…LLWQNEDKSI (91 aa)) are domain I, interacts with DnaA modulators. The tract at residues 91 to 122 (ICSIDIQVTEEKNSSSSIISKNKEESVNNLGS) is domain II. A domain III, AAA+ region region spans residues 123–342 (PLDPRFTFDN…GALNKVAHTS (220 aa)). 4 residues coordinate ATP: G169, G171, K172, and T173. The domain IV, binds dsDNA stretch occupies residues 343 to 460 (LIGRSMTVES…EINQLRKMFK (118 aa)).

The protein belongs to the DnaA family. Oligomerizes as a right-handed, spiral filament on DNA at oriC.

The protein localises to the cytoplasm. Plays an essential role in the initiation and regulation of chromosomal replication. ATP-DnaA binds to the origin of replication (oriC) to initiate formation of the DNA replication initiation complex once per cell cycle. Binds the DnaA box (a 9 base pair repeat at the origin) and separates the double-stranded (ds)DNA. Forms a right-handed helical filament on oriC DNA; dsDNA binds to the exterior of the filament while single-stranded (ss)DNA is stabiized in the filament's interior. The ATP-DnaA-oriC complex binds and stabilizes one strand of the AT-rich DNA unwinding element (DUE), permitting loading of DNA polymerase. After initiation quickly degrades to an ADP-DnaA complex that is not apt for DNA replication. Binds acidic phospholipids. This chain is Chromosomal replication initiator protein DnaA, found in Wolbachia sp. subsp. Brugia malayi (strain TRS).